The chain runs to 39 residues: Cytochrome b559 subunit beta (39 aa).

Residues 14–30 traverse the membrane as a helical segment; that stretch reads WLAVHGLAVPTVFFLGS. Residue His18 participates in heme binding.

The protein belongs to the PsbE/PsbF family. In terms of assembly, heterodimer of an alpha subunit and a beta subunit. PSII is composed of 1 copy each of membrane proteins PsbA, PsbB, PsbC, PsbD, PsbE, PsbF, PsbH, PsbI, PsbJ, PsbK, PsbL, PsbM, PsbT, PsbX, PsbY, PsbZ, Psb30/Ycf12, at least 3 peripheral proteins of the oxygen-evolving complex and a large number of cofactors. It forms dimeric complexes. The cofactor is heme b.

It localises to the plastid. The protein localises to the chloroplast thylakoid membrane. Its function is as follows. This b-type cytochrome is tightly associated with the reaction center of photosystem II (PSII). PSII is a light-driven water:plastoquinone oxidoreductase that uses light energy to abstract electrons from H(2)O, generating O(2) and a proton gradient subsequently used for ATP formation. It consists of a core antenna complex that captures photons, and an electron transfer chain that converts photonic excitation into a charge separation. The polypeptide is Cytochrome b559 subunit beta (Adiantum capillus-veneris (Maidenhair fern)).